The following is a 114-amino-acid chain: uncharacterized protein (114 aa).

Glycine 2 is lipidated: N-myristoyl glycine; by host. Helical transmembrane passes span 11–31 (FGLILVGAIIFTASYLWKDLL) and 44–64 (GLMWRSIYTILVTVILVLVAI). The segment at 73–114 (VNKDSKDPKDKSIEFDDSPIRDGSSGTPDNSNEPTDLSVETS) is disordered. Residues 75–92 (KDSKDPKDKSIEFDDSPI) show a composition bias toward basic and acidic residues. Polar residues predominate over residues 96–114 (SSGTPDNSNEPTDLSVETS).

The protein localises to the membrane. This is an uncharacterized protein from Acanthamoeba polyphaga (Amoeba).